The chain runs to 76 residues: ATP synthase subunit c (76 aa).

The next 2 membrane-spanning stretches (helical) occupy residues 12–32 and 54–74; these read LGSI…GIIF and ILGF…PFVY.

The protein belongs to the ATPase C chain family. As to quaternary structure, F-type ATPases have 2 components, F(1) - the catalytic core - and F(0) - the membrane proton channel. F(1) has five subunits: alpha(3), beta(3), gamma(1), delta(1), epsilon(1). F(0) has three main subunits: a(1), b(2) and c(10-14). The alpha and beta chains form an alternating ring which encloses part of the gamma chain. F(1) is attached to F(0) by a central stalk formed by the gamma and epsilon chains, while a peripheral stalk is formed by the delta and b chains.

The protein resides in the cell membrane. In terms of biological role, f(1)F(0) ATP synthase produces ATP from ADP in the presence of a proton or sodium gradient. F-type ATPases consist of two structural domains, F(1) containing the extramembraneous catalytic core and F(0) containing the membrane proton channel, linked together by a central stalk and a peripheral stalk. During catalysis, ATP synthesis in the catalytic domain of F(1) is coupled via a rotary mechanism of the central stalk subunits to proton translocation. Functionally, key component of the F(0) channel; it plays a direct role in translocation across the membrane. A homomeric c-ring of between 10-14 subunits forms the central stalk rotor element with the F(1) delta and epsilon subunits. The protein is ATP synthase subunit c of Streptomyces coelicolor (strain ATCC BAA-471 / A3(2) / M145).